The following is a 1019-amino-acid chain: MFLEINFYSTFFQRRPSLWKERCKFEEVDAQGNSISYSHHPPDLTGQRSPLTPTTMRIVDRIPTVVGFRVIPTTVLVLLTYLTIFTLVIVTDWLPEPPKNQNGLDLKQAYTDLRHITAHPHPYNSHYNDAVHDYILSRVRPVAASTSFVHISDDQTSNGSWASPGYGVYFEGTNILVKIDGKSSNGNDGVLFSAHYDSVSTAPGATDDGMGVVTLLQLIDYFAKHRPDRTAIFNINNGEEDWLNGAHAFLQHTWSNLTDTFLNLEGAAAGGRPILFRATSTSPVRAFRSDYVPHPHANVISSDAFARGVIRSGTDYEVYTGAGAEMEGLDVAFYKGRSRYHTKYDAVPYTNGGERSLWAMMETAQGAGNALLNAKRHKQDQGSGGTPVYFDLVKAELVIFYLNDLLIYNVVSLVVGPISLIFFVVCEYVLRNERARQPNGHPVSRPSVLEWLKQRSWLRALWRRSKFWIALVITIALQALLVWGYLAFNSFTVYSSPYLVLISFFSLAYLSLVIPLTFTFNQTQSPTAKYIAPEREKHTLLIQVYIFTWILLLFSTIAVARAQVGGLYFVTAWNTGVWIACLLAAVEGMMLPVPQGGPRVRFHSAHHHHHHEHEEDQDADDDDREQRQPPTEATPLIGYSRASLRKPQEGGVVGWWIVHLLLTIPAPVLLIAQMGSLLLDSLPQTLADGSPAYVVYAAASLTAVLLAVPLTPFSGKLHRGLFFLFFLSFLIVTAYLWLAFPFSSADPLKVFFQQKVTLSNVVSERHSSIMGLSNSTVHPTAGVRKVVTAITGTPYYLKNEIIPRLPSASGKELKCRDEKAKRGLVTCEWESTLVPSPGGRNPWEDDFAAAQGRVGATSKSRQSWFKAEVARTGVRKGQIVLQGRNTRSCRLYFDSRPIIKYVVEGGHEGMQKGYEVGKVGASEVRLWSRTRDREFVVDFEWEDDDGREGEGITGRIACEWVEYESGNLDNGDGQWDLQRGGGERAKIPAFEEVLAFLPEWAVASKTTDGLVEAWSPFSV.

Residues 1 to 69 are Cytoplasmic-facing; sequence MFLEINFYST…DRIPTVVGFR (69 aa). Residues 70–90 traverse the membrane as a helical segment; that stretch reads VIPTTVLVLLTYLTIFTLVIV. Residues 91-404 are Vacuolar-facing; that stretch reads TDWLPEPPKN…AELVIFYLND (314 aa). The N-linked (GlcNAc...) asparagine glycan is linked to Asn158. Zn(2+)-binding residues include His195 and Asp207. The active-site Proton acceptor is the Glu239. Glu240 serves as a coordination point for Zn(2+). Residue Asn256 is glycosylated (N-linked (GlcNAc...) asparagine). Zn(2+)-binding residues include Glu265 and His341. A helical membrane pass occupies residues 405-425; the sequence is LLIYNVVSLVVGPISLIFFVV. Topologically, residues 426–466 are cytoplasmic; it reads CEYVLRNERARQPNGHPVSRPSVLEWLKQRSWLRALWRRSK. Residues 467–487 form a helical membrane-spanning segment; that stretch reads FWIALVITIALQALLVWGYLA. The Vacuolar portion of the chain corresponds to 488 to 497; that stretch reads FNSFTVYSSP. The chain crosses the membrane as a helical span at residues 498 to 518; sequence YLVLISFFSLAYLSLVIPLTF. The Cytoplasmic segment spans residues 519-539; sequence TFNQTQSPTAKYIAPEREKHT. A helical transmembrane segment spans residues 540 to 560; sequence LLIQVYIFTWILLLFSTIAVA. The Vacuolar segment spans residues 561-565; that stretch reads RAQVG. A helical transmembrane segment spans residues 566 to 586; that stretch reads GLYFVTAWNTGVWIACLLAAV. The Cytoplasmic segment spans residues 587 to 651; that stretch reads EGMMLPVPQG…ASLRKPQEGG (65 aa). Positions 603–634 are disordered; that stretch reads HSAHHHHHHEHEEDQDADDDDREQRQPPTEAT. Residues 652–672 form a helical membrane-spanning segment; that stretch reads VVGWWIVHLLLTIPAPVLLIA. The Vacuolar segment spans residues 673–692; it reads QMGSLLLDSLPQTLADGSPA. The helical transmembrane segment at 693 to 713 threads the bilayer; sequence YVVYAAASLTAVLLAVPLTPF. Residues 714 to 719 are Cytoplasmic-facing; that stretch reads SGKLHR. The helical transmembrane segment at 720–740 threads the bilayer; the sequence is GLFFLFFLSFLIVTAYLWLAF. Over 741-1019 the chain is Vacuolar; that stretch reads PFSSADPLKV…LVEAWSPFSV (279 aa). Residue Asn774 is glycosylated (N-linked (GlcNAc...) asparagine).

The protein belongs to the peptidase M28 family. Zn(2+) serves as cofactor.

The protein localises to the vacuole membrane. May be involved in vacuolar sorting and osmoregulation. This chain is Vacuolar membrane protease, found in Laccaria bicolor (strain S238N-H82 / ATCC MYA-4686) (Bicoloured deceiver).